A 341-amino-acid polypeptide reads, in one-letter code: Ubiquinone biosynthesis protein COQ4, mitochondrial (341 aa).

The N-terminal 16 residues, 1–16 (MLSRISSVRIGTQVRQ), are a transit peptide targeting the mitochondrion. The Zn(2+) site is built by H220, D221, H224, and E236.

This sequence belongs to the COQ4 family. As to quaternary structure, component of a multi-subunit COQ enzyme complex, composed of at least COQ3, COQ4, COQ5, COQ6, COQ7 and COQ9. The cofactor is Zn(2+).

The protein localises to the mitochondrion inner membrane. It carries out the reaction a 4-hydroxy-3-methoxy-5-(all-trans-polyprenyl)benzoate + H(+) = a 2-methoxy-6-(all-trans-polyprenyl)phenol + CO2. Its pathway is cofactor biosynthesis; ubiquinone biosynthesis. Functionally, lyase that catalyzes the C1-decarboxylation of 4-hydroxy-3-methoxy-5-(all-trans-polyprenyl)benzoic acid into 2-methoxy-6-(all-trans-polyprenyl)phenol during ubiquinone biosynthesis. This is Ubiquinone biosynthesis protein COQ4, mitochondrial from Vanderwaltozyma polyspora (strain ATCC 22028 / DSM 70294 / BCRC 21397 / CBS 2163 / NBRC 10782 / NRRL Y-8283 / UCD 57-17) (Kluyveromyces polysporus).